Reading from the N-terminus, the 220-residue chain is N-(5'-phosphoribosyl)anthranilate isomerase (220 aa).

It belongs to the TrpF family.

The enzyme catalyses N-(5-phospho-beta-D-ribosyl)anthranilate = 1-(2-carboxyphenylamino)-1-deoxy-D-ribulose 5-phosphate. The protein operates within amino-acid biosynthesis; L-tryptophan biosynthesis; L-tryptophan from chorismate: step 3/5. In Agrobacterium fabrum (strain C58 / ATCC 33970) (Agrobacterium tumefaciens (strain C58)), this protein is N-(5'-phosphoribosyl)anthranilate isomerase.